The chain runs to 385 residues: Hemagglutinin-esterase (385 aa).

A signal peptide spans 1–11 (MLIIFLFFNFC). An esterase domain 1 region spans residues 1 to 121 (MLIIFLFFNF…SNDVWIFNKV (121 aa)). Topologically, residues 12–361 (YGFNEPLNVV…LNCFYDPLPI (350 aa)) are virion surface. Residue Ser34 is the Nucleophile of the active site. Cys38 and Cys59 are disulfide-bonded. 6 N-linked (GlcNAc...) asparagine; by host glycosylation sites follow: Asn83, Asn110, Asn145, Asn171, Asn196, and Asn251. Cys107 and Cys155 are disulfide-bonded. Positions 122-239 (RFYRALYSNM…GSYKIFSTGF (118 aa)) are receptor binding. Disulfide bonds link Cys183-Cys249 and Cys191-Cys222. The tract at residues 240-352 (VLSIPTKALC…NCPTSAYIKL (113 aa)) is esterase domain 2. Cys280 and Cys285 are disulfide-bonded. Asn289 carries an N-linked (GlcNAc...) asparagine; by host glycan. Active-site charge relay system residues include Asp299 and His302. The cysteines at positions 320 and 344 are disulfide-linked. Asn331 carries an N-linked (GlcNAc...) asparagine; by host glycan. The chain crosses the membrane as a helical span at residues 362 to 382 (ILQGILLFLALLFIVFLLFLV). The Intravirion segment spans residues 383–385 (YHG).

This sequence belongs to the influenza type C/coronaviruses hemagglutinin-esterase family. Homodimer; disulfide-linked. Forms a complex with the M protein in the pre-Golgi. Associates then with S-M complex to form a ternary complex S-M-HE. N-glycosylated in the host RER.

The protein resides in the virion membrane. It localises to the host cell membrane. It catalyses the reaction N-acetyl-9-O-acetylneuraminate + H2O = N-acetylneuraminate + acetate + H(+). The enzyme catalyses N-acetyl-4-O-acetylneuraminate + H2O = N-acetylneuraminate + acetate + H(+). Its function is as follows. Structural protein that makes short spikes at the surface of the virus. Contains receptor binding and receptor-destroying activities. Mediates de-O-acetylation of N-acetyl-4-O-acetylneuraminic acid, which is probably the receptor determinant recognized by the virus on the surface of erythrocytes and susceptible cells. This receptor-destroying activity is important for virus release as it probably helps preventing self-aggregation and ensures the efficient spread of the progeny virus from cell to cell. May serve as a secondary viral attachment protein for initiating infection, the spike protein being the major one. May become a target for both the humoral and the cellular branches of the immune system. The protein is Hemagglutinin-esterase of Human coronavirus HKU1 (isolate N2) (HCoV-HKU1).